A 214-amino-acid polypeptide reads, in one-letter code: A-type ATP synthase subunit D (214 aa).

Belongs to the V-ATPase D subunit family. In terms of assembly, has multiple subunits with at least A(3), B(3), C, D, E, F, H, I and proteolipid K(x).

Its subcellular location is the cell membrane. Its function is as follows. Component of the A-type ATP synthase that produces ATP from ADP in the presence of a proton gradient across the membrane. This chain is A-type ATP synthase subunit D, found in Pyrococcus horikoshii (strain ATCC 700860 / DSM 12428 / JCM 9974 / NBRC 100139 / OT-3).